Consider the following 623-residue polypeptide: Transketolase (623 aa).

N-acetylmethionine is present on M1. S3 carries the phosphoserine modification. 2 positions are modified to N6-acetyllysine: K6 and K11. H37 contributes to the substrate binding site. 2 residues coordinate thiamine diphosphate: S40 and H77. Phosphoserine is present on S104. 123-125 (GSL) serves as a coordination point for thiamine diphosphate. K144 is modified (N6-acetyllysine). D155 serves as a coordination point for Mg(2+). Thiamine diphosphate contacts are provided by G156 and N185. Mg(2+)-binding residues include N185 and L187. N6-acetyllysine is present on residues K204, K232, and K241. Residues K244 and H258 each coordinate thiamine diphosphate. Substrate is bound at residue H258. K260 is modified (N6-acetyllysine). A Phosphotyrosine modification is found at Y275. T287 carries the phosphothreonine modification. Phosphoserine is present on S295. The substrate site is built by R318 and S345. Residue S345 is modified to Phosphoserine. K352 participates in a covalent cross-link: Glycyl lysine isopeptide (Lys-Gly) (interchain with G-Cter in SUMO2). E366 functions as the Proton donor in the catalytic mechanism. F392 provides a ligand contact to thiamine diphosphate. Substrate-binding residues include H416 and D424. Q428 contributes to the thiamine diphosphate binding site. Residue R474 coordinates substrate. K538 and K603 each carry N6-acetyllysine.

It belongs to the transketolase family. In terms of assembly, homodimer. Mg(2+) is required as a cofactor. Ca(2+) serves as cofactor. The cofactor is Mn(2+). It depends on Co(2+) as a cofactor. Requires thiamine diphosphate as cofactor.

The enzyme catalyses D-sedoheptulose 7-phosphate + D-glyceraldehyde 3-phosphate = aldehydo-D-ribose 5-phosphate + D-xylulose 5-phosphate. Catalyzes the transfer of a two-carbon ketol group from a ketose donor to an aldose acceptor, via a covalent intermediate with the cofactor thiamine pyrophosphate. This Homo sapiens (Human) protein is Transketolase (TKT).